We begin with the raw amino-acid sequence, 644 residues long: Threonine--tRNA ligase (644 aa).

Positions 1 to 62 constitute a TGS domain; the sequence is MSFSVTLPDG…DSDVEIAIIT (62 aa). The catalytic stretch occupies residues 240-538; the sequence is DHRTIGRDLD…LTEIYKGAFP (299 aa). 3 residues coordinate Zn(2+): cysteine 334, histidine 385, and histidine 515.

It belongs to the class-II aminoacyl-tRNA synthetase family. Homodimer. It depends on Zn(2+) as a cofactor.

The protein resides in the cytoplasm. The enzyme catalyses tRNA(Thr) + L-threonine + ATP = L-threonyl-tRNA(Thr) + AMP + diphosphate + H(+). Catalyzes the attachment of threonine to tRNA(Thr) in a two-step reaction: L-threonine is first activated by ATP to form Thr-AMP and then transferred to the acceptor end of tRNA(Thr). Also edits incorrectly charged L-seryl-tRNA(Thr). This Lactobacillus acidophilus (strain ATCC 700396 / NCK56 / N2 / NCFM) protein is Threonine--tRNA ligase.